The primary structure comprises 57 residues: Protein 19.3 (57 aa).

The chain is Protein 19.3 from Escherichia coli (Bacteriophage T7).